Here is a 102-residue protein sequence, read N- to C-terminus: Integration host factor subunit beta (102 aa).

This sequence belongs to the bacterial histone-like protein family. In terms of assembly, heterodimer of an alpha and a beta chain.

This protein is one of the two subunits of integration host factor, a specific DNA-binding protein that functions in genetic recombination as well as in transcriptional and translational control. The protein is Integration host factor subunit beta (ihfB) of Rhizobium radiobacter (Agrobacterium tumefaciens).